Reading from the N-terminus, the 94-residue chain is MKKIKLQELKDSEILEQLEEARKVLRTSRFQYGVARSLENPKVIHNTKKKIAKLLTIQRERQLKVNPGERKSRVLSRAKRKKKNLARLSAKVKG.

Positions 66–94 are disordered; it reads NPGERKSRVLSRAKRKKKNLARLSAKVKG. Positions 73–94 are enriched in basic residues; the sequence is RVLSRAKRKKKNLARLSAKVKG.

Belongs to the universal ribosomal protein uL29 family.

The chain is Large ribosomal subunit protein uL29 from Leptospira borgpetersenii serovar Hardjo-bovis (strain JB197).